Reading from the N-terminus, the 515-residue chain is Alpha-1B adrenergic receptor (515 aa).

At Met-1–Ala-45 the chain is on the extracellular side. N-linked (GlcNAc...) asparagine glycosylation is found at Asn-10, Asn-24, and Asn-34. Residues Ile-46–Val-70 traverse the membrane as a helical segment. Over Ala-71–Phe-83 the chain is Cytoplasmic. The helical transmembrane segment at Ile-84–Leu-105 threads the bilayer. Residues Glu-106 to Arg-115 lie on the Extracellular side of the membrane. The chain crosses the membrane as a helical span at residues Ile-116–Ile-141. A disulfide bridge connects residues Cys-118 and Cys-195. The Cytoplasmic segment spans residues Asp-142 to Lys-161. The chain crosses the membrane as a helical span at residues Ala-162–Leu-182. At Gly-183 to Pro-201 the chain is on the extracellular side. Residues Phe-202–Cys-224 traverse the membrane as a helical segment. Topologically, residues Arg-225–Thr-295 are cytoplasmic. Thr-264 bears the Phosphothreonine mark. Residues Leu-296–Leu-319 traverse the membrane as a helical segment. The Extracellular portion of the chain corresponds to Phe-320–Pro-326. Residues Asp-327–Ser-351 traverse the membrane as a helical segment. Topologically, residues Ser-352 to Phe-515 are cytoplasmic. Cys-365 carries the S-palmitoyl cysteine lipid modification. The Nuclear localization signal motif lies at Arg-368 to Arg-378. Disordered stretches follow at residues Gly-392–Gly-430 and Leu-474–Phe-515. Composition is skewed to polar residues over residues Ser-410–Pro-424 and Gly-484–Ala-498.

It belongs to the G-protein coupled receptor 1 family. Adrenergic receptor subfamily. ADRA1B sub-subfamily. As to quaternary structure, homo- and heterooligomer. Heterooligomerizes with ADRA1B homooligomers in cardiac myocytes. Interacts with CAVIN4.

The protein localises to the nucleus membrane. The protein resides in the cell membrane. Its subcellular location is the cytoplasm. It is found in the membrane. It localises to the caveola. Functionally, this alpha-adrenergic receptor mediates its action by association with G proteins that activate a phosphatidylinositol-calcium second messenger system. Its effect is mediated by G(q) and G(11) proteins. Nuclear ADRA1A-ADRA1B heterooligomers regulate phenylephrine (PE)-stimulated ERK signaling in cardiac myocytes. This Rattus norvegicus (Rat) protein is Alpha-1B adrenergic receptor (Adra1b).